Consider the following 119-residue polypeptide: Small ribosomal subunit protein uS17 (119 aa).

Positions 1 to 21 (MAEAKTGAKATKSAAAGAADG) are enriched in low complexity. A disordered region spans residues 1–44 (MAEAKTGAKATKSAAAGAADGASKEKGPKHTPSTPKPRGRRKTR).

This sequence belongs to the universal ribosomal protein uS17 family. Part of the 30S ribosomal subunit.

Functionally, one of the primary rRNA binding proteins, it binds specifically to the 5'-end of 16S ribosomal RNA. The polypeptide is Small ribosomal subunit protein uS17 (Mycobacterium marinum (strain ATCC BAA-535 / M)).